The primary structure comprises 929 residues: Bifunctional glutamine synthetase adenylyltransferase/adenylyl-removing enzyme (929 aa).

The tract at residues 1–423 (MSTPIDSSRA…RHFEQIFAAR (423 aa)) is adenylyl removase. An adenylyl transferase region spans residues 433–929 (ARIRPEQSGD…FQLWEDIFGT (497 aa)).

The protein belongs to the GlnE family. Requires Mg(2+) as cofactor.

It carries out the reaction [glutamine synthetase]-O(4)-(5'-adenylyl)-L-tyrosine + phosphate = [glutamine synthetase]-L-tyrosine + ADP. The catalysed reaction is [glutamine synthetase]-L-tyrosine + ATP = [glutamine synthetase]-O(4)-(5'-adenylyl)-L-tyrosine + diphosphate. In terms of biological role, involved in the regulation of glutamine synthetase GlnA, a key enzyme in the process to assimilate ammonia. When cellular nitrogen levels are high, the C-terminal adenylyl transferase (AT) inactivates GlnA by covalent transfer of an adenylyl group from ATP to specific tyrosine residue of GlnA, thus reducing its activity. Conversely, when nitrogen levels are low, the N-terminal adenylyl removase (AR) activates GlnA by removing the adenylyl group by phosphorolysis, increasing its activity. The regulatory region of GlnE binds the signal transduction protein PII (GlnB) which indicates the nitrogen status of the cell. In Nitrosomonas europaea (strain ATCC 19718 / CIP 103999 / KCTC 2705 / NBRC 14298), this protein is Bifunctional glutamine synthetase adenylyltransferase/adenylyl-removing enzyme.